The sequence spans 314 residues: Malate dehydrogenase (314 aa).

NAD(+) is bound by residues 7–13 and Asp34; that span reads GAAGGIG. Substrate-binding residues include Arg81 and Arg87. NAD(+)-binding positions include Asn94 and 117-119; that span reads ITN. Substrate is bound by residues Asn119 and Arg153. His177 serves as the catalytic Proton acceptor. Met230 serves as a coordination point for NAD(+).

It belongs to the LDH/MDH superfamily. MDH type 1 family. Homodimer.

The enzyme catalyses (S)-malate + NAD(+) = oxaloacetate + NADH + H(+). Functionally, catalyzes the reversible oxidation of malate to oxaloacetate. This Glaesserella parasuis serovar 5 (strain SH0165) (Haemophilus parasuis) protein is Malate dehydrogenase.